Reading from the N-terminus, the 300-residue chain is Ribosomal protein L11 methyltransferase (300 aa).

S-adenosyl-L-methionine contacts are provided by Thr-147, Gly-168, Asp-190, and Asn-236.

Belongs to the methyltransferase superfamily. PrmA family.

The protein resides in the cytoplasm. The catalysed reaction is L-lysyl-[protein] + 3 S-adenosyl-L-methionine = N(6),N(6),N(6)-trimethyl-L-lysyl-[protein] + 3 S-adenosyl-L-homocysteine + 3 H(+). Functionally, methylates ribosomal protein L11. The chain is Ribosomal protein L11 methyltransferase from Leptospira borgpetersenii serovar Hardjo-bovis (strain JB197).